A 375-amino-acid polypeptide reads, in one-letter code: Putative type I specificity subunit S.MpnORF638P (375 aa).

It belongs to the type-I restriction system S methylase family. As to quaternary structure, the methyltransferase is composed of M and S polypeptides.

The specificity (S) subunit of a type I methyltransferase (MTase); this subunit dictates DNA sequence specificity. The single R subunit has multiple frameshifts and is probably not expressed. The chain is Putative type I specificity subunit S.MpnORF638P from Mycoplasma pneumoniae (strain ATCC 29342 / M129 / Subtype 1) (Mycoplasmoides pneumoniae).